The following is a 165-amino-acid chain: V-type proton ATPase 16 kDa proteolipid subunit (165 aa).

Over 1 to 10 (MSSVFSGDET) the chain is Lumenal. A helical transmembrane segment spans residues 11–33 (APFFGFLGAAAALVFSCMGAAYG). At 34 to 55 (TAKSGVGVASMGVMRPELVMKS) the chain is on the cytoplasmic side. The chain crosses the membrane as a helical span at residues 56–76 (IVPVVMAGVLGIYGLIIAVII). Topologically, residues 77–95 (STGINPKAKPYFLFDGYAH) are lumenal. Residues 96–117 (LSSGLACGLAGLAAGMAIGIVG) form a helical membrane-spanning segment. The Cytoplasmic segment spans residues 118–129 (DAGVRANAQQPK). A helical membrane pass occupies residues 130 to 155 (LFVGMILILIFAEALALYGLIVGIIL). The Lumenal portion of the chain corresponds to 156–165 (SSRAGQSRAD).

Belongs to the V-ATPase proteolipid subunit family. In terms of assembly, V-ATPase is a heteromultimeric enzyme composed of a peripheral catalytic V1 complex (main components: subunits A, B, C, D, E, and F) attached to an integral membrane V0 proton pore complex (main component: the proteolipid protein; which is present as a hexamer that forms the proton-conducting pore).

It localises to the vacuole membrane. In terms of biological role, proton-conducting pore forming subunit of the membrane integral V0 complex of vacuolar ATPase. V-ATPase is responsible for acidifying a variety of intracellular compartments in eukaryotic cells. The polypeptide is V-type proton ATPase 16 kDa proteolipid subunit (VATP-P1) (Avena sativa (Oat)).